A 217-amino-acid polypeptide reads, in one-letter code: Probable transaldolase (217 aa).

Residue Lys83 is the Schiff-base intermediate with substrate of the active site.

The protein belongs to the transaldolase family. Type 3B subfamily.

The protein resides in the cytoplasm. It catalyses the reaction D-sedoheptulose 7-phosphate + D-glyceraldehyde 3-phosphate = D-erythrose 4-phosphate + beta-D-fructose 6-phosphate. Its pathway is carbohydrate degradation; pentose phosphate pathway; D-glyceraldehyde 3-phosphate and beta-D-fructose 6-phosphate from D-ribose 5-phosphate and D-xylulose 5-phosphate (non-oxidative stage): step 2/3. Functionally, transaldolase is important for the balance of metabolites in the pentose-phosphate pathway. The protein is Probable transaldolase of Rhizobium meliloti (strain 1021) (Ensifer meliloti).